The primary structure comprises 568 residues: 2-succinyl-5-enolpyruvyl-6-hydroxy-3-cyclohexene-1-carboxylate synthase (568 aa).

Belongs to the TPP enzyme family. MenD subfamily. In terms of assembly, homodimer. Mg(2+) is required as a cofactor. Mn(2+) serves as cofactor. It depends on thiamine diphosphate as a cofactor.

The enzyme catalyses isochorismate + 2-oxoglutarate + H(+) = 5-enolpyruvoyl-6-hydroxy-2-succinyl-cyclohex-3-ene-1-carboxylate + CO2. It participates in quinol/quinone metabolism; 1,4-dihydroxy-2-naphthoate biosynthesis; 1,4-dihydroxy-2-naphthoate from chorismate: step 2/7. It functions in the pathway quinol/quinone metabolism; menaquinone biosynthesis. Functionally, catalyzes the thiamine diphosphate-dependent decarboxylation of 2-oxoglutarate and the subsequent addition of the resulting succinic semialdehyde-thiamine pyrophosphate anion to isochorismate to yield 2-succinyl-5-enolpyruvyl-6-hydroxy-3-cyclohexene-1-carboxylate (SEPHCHC). This Pasteurella multocida (strain Pm70) protein is 2-succinyl-5-enolpyruvyl-6-hydroxy-3-cyclohexene-1-carboxylate synthase.